We begin with the raw amino-acid sequence, 530 residues long: uncharacterized protein (530 aa).

Composition is skewed to basic and acidic residues over residues 1–11 (MTALNDTERAV) and 28–38 (PRSEETASERP). The tract at residues 1-38 (MTALNDTERAVRNWTAGRPHRPAPMRPPRSEETASERP) is disordered. Residues 1–50 (MTALNDTERAVRNWTAGRPHRPAPMRPPRSEETASERPSRYYPTWLPSRS) lie on the Cytoplasmic side of the membrane. The helical transmembrane segment at 51–71 (FIAAVIAIGGMQLLATMDSTV) threads the bilayer. The Extracellular segment spans residues 72-91 (AIVALPKIQNELSLSDAGRS). The helical transmembrane segment at 92–112 (WVITAYVLTFGGLMLLGGRLG) threads the bilayer. The Cytoplasmic portion of the chain corresponds to 113-119 (DTIGRKR). Residues 120 to 140 (TFIVGVALFTISSVLCAVAWD) form a helical membrane-spanning segment. Over 141-150 (EATLVIARLS) the chain is Extracellular. The helical transmembrane segment at 151-171 (QGVGSAIASPTGLALVATTFP) threads the bilayer. The Cytoplasmic segment spans residues 172–180 (KGPARNAAT). A helical transmembrane segment spans residues 181–201 (AVFAAMTAIGSVMGLVVGGAL). At 202 to 203 (TE) the chain is on the extracellular side. Residues 204–224 (VSWRWAFLVNVPIGLVMIYLA) traverse the membrane as a helical segment. Residues 225 to 239 (RTALRETNKERMKLD) lie on the Cytoplasmic side of the membrane. Residues 240 to 260 (ATGAILATLACTAAVFAFSIG) form a helical membrane-spanning segment. The Extracellular segment spans residues 261-266 (PEKGWM). Residues 267 to 287 (SGITIGSGLVALAAAVAFVIV) form a helical membrane-spanning segment. Topologically, residues 288–306 (ERTAENPVVPFHLFRDRNR) are cytoplasmic. The chain crosses the membrane as a helical span at residues 307–327 (LVTFSAILLAGGVMFSLTVCI). The Extracellular portion of the chain corresponds to 328–343 (GLYVQDILGYSALRAG). Residues 344–364 (VGFIPFVIAMGIGLGVSSQLV) traverse the membrane as a helical segment. Residues 365 to 370 (SRFSPR) lie on the Cytoplasmic side of the membrane. The helical transmembrane segment at 371-391 (VLTIGGGYLLFGAMLYGSFFM) threads the bilayer. Topologically, residues 392–400 (HRGVPYFPN) are extracellular. Residues 401–421 (LVMPIVVGGIGIGMAVVPLTL) traverse the membrane as a helical segment. At 422-437 (SAIAGVGFDQIGPVSA) the chain is on the cytoplasmic side. Residues 438–458 (IALMLQSLGGPLVLAVIQAVI) traverse the membrane as a helical segment. Residues 459-488 (TSRTLYLGGTTGPVKFMNDVQLAALDHAYT) lie on the Extracellular side of the membrane. The helical transmembrane segment at 489 to 509 (YGLLWVAGAAIIVGGMALFIG) threads the bilayer. The Cytoplasmic segment spans residues 510 to 530 (YTPQQVAHAQEVKEAIDAGEL).

This sequence belongs to the major facilitator superfamily.

It is found in the cell membrane. This is an uncharacterized protein from Mycobacterium tuberculosis (strain CDC 1551 / Oshkosh).